Reading from the N-terminus, the 1179-residue chain is uncharacterized protein (1179 aa).

This is an uncharacterized protein from Ictaluridae (bullhead catfishes).